Consider the following 178-residue polypeptide: Ribosome rescue factor SmrB (178 aa).

One can recognise a Smr domain in the interval 99-174; sequence LDLHGLTQMQ…GNAALLILIE (76 aa).

It belongs to the SmrB family. Associates with collided ribosomes, but not with correctly translating polysomes.

Acts as a ribosome collision sensor. Detects stalled/collided disomes (pairs of ribosomes where the leading ribosome is stalled and a second ribosome has collided with it) and endonucleolytically cleaves mRNA at the 5' boundary of the stalled ribosome. Stalled/collided disomes form a new interface (primarily via the 30S subunits) that binds SmrB. Cleaved mRNA becomes available for tmRNA ligation, leading to ribosomal subunit dissociation and rescue of stalled ribosomes. The chain is Ribosome rescue factor SmrB from Photorhabdus laumondii subsp. laumondii (strain DSM 15139 / CIP 105565 / TT01) (Photorhabdus luminescens subsp. laumondii).